The following is a 141-amino-acid chain: Hemoglobin subunit zeta (141 aa).

N-acetylserine is present on Ser1. The Globin domain occupies 1-141; that stretch reads SLTKAERTII…VSGVLTEKYR (141 aa). Thr28 bears the Phosphothreonine mark. Ser52 carries the phosphoserine modification. His58 contacts heme b. Ser72 carries the post-translational modification Phosphoserine. Residue His87 coordinates heme b.

This sequence belongs to the globin family. Heterotetramer of two zeta chains and two epsilon chains.

The zeta chain is an alpha-type chain of mammalian embryonic hemoglobin. This is Hemoglobin subunit zeta from Sus scrofa (Pig).